The sequence spans 289 residues: Oxaloacetate decarboxylase (289 aa).

Ser-50 contacts substrate. Residue Asp-88 participates in Mg(2+) binding. Substrate is bound by residues Arg-159 and His-235.

It belongs to the isocitrate lyase/PEP mutase superfamily. Oxaloacetate decarboxylase family. As to quaternary structure, homotetramer; dimer of dimers. It depends on Mg(2+) as a cofactor.

The catalysed reaction is oxaloacetate + H(+) = pyruvate + CO2. Functionally, catalyzes the decarboxylation of oxaloacetate into pyruvate. Seems to play a role in maintaining cellular concentrations of bicarbonate and pyruvate. The chain is Oxaloacetate decarboxylase from Pseudomonas entomophila (strain L48).